We begin with the raw amino-acid sequence, 103 residues long: DNA-directed RNA polymerase subunit omega (103 aa).

Positions 52–103 (EIESGNVTIHPDPEGKREAVRRRIEEEKRRKEEEEKKIKEQIAKEKEDGEKI) are disordered. Residues 62–103 (PDPEGKREAVRRRIEEEKRRKEEEEKKIKEQIAKEKEDGEKI) are compositionally biased toward basic and acidic residues.

It belongs to the RNA polymerase subunit omega family. As to quaternary structure, the RNAP catalytic core consists of 2 alpha, 1 beta, 1 beta' and 1 omega subunit. When a sigma factor is associated with the core the holoenzyme is formed, which can initiate transcription.

It carries out the reaction RNA(n) + a ribonucleoside 5'-triphosphate = RNA(n+1) + diphosphate. Functionally, promotes RNA polymerase assembly. Latches the N- and C-terminal regions of the beta' subunit thereby facilitating its interaction with the beta and alpha subunits. This chain is DNA-directed RNA polymerase subunit omega, found in Streptococcus pneumoniae serotype 19F (strain G54).